We begin with the raw amino-acid sequence, 345 residues long: UDP-3-O-acylglucosamine N-acyltransferase 3 (345 aa).

Histidine 236 (proton acceptor) is an active-site residue.

Belongs to the transferase hexapeptide repeat family. LpxD subfamily. In terms of assembly, homotrimer.

The enzyme catalyses a UDP-3-O-[(3R)-3-hydroxyacyl]-alpha-D-glucosamine + a (3R)-hydroxyacyl-[ACP] = a UDP-2-N,3-O-bis[(3R)-3-hydroxyacyl]-alpha-D-glucosamine + holo-[ACP] + H(+). The protein operates within bacterial outer membrane biogenesis; LPS lipid A biosynthesis. Functionally, catalyzes the N-acylation of UDP-3-O-acylglucosamine using 3-hydroxyacyl-ACP as the acyl donor. Is involved in the biosynthesis of lipid A, a phosphorylated glycolipid that anchors the lipopolysaccharide to the outer membrane of the cell. This is UDP-3-O-acylglucosamine N-acyltransferase 3 from Gloeobacter violaceus (strain ATCC 29082 / PCC 7421).